The sequence spans 540 residues: Putative actin-fragmin kinase DDB_G0287957 (540 aa).

Residues 27–68 (KNENLNIKNEILNNNNNNNNNKNNNNNNNNNNNIENNSKNEN) adopt a coiled-coil conformation. 2 disordered regions span residues 37-70 (ILNN…ENFN) and 317-341 (NNNN…INNC).

It belongs to the protein kinase superfamily. AFK Ser/Thr protein kinase family.

The polypeptide is Putative actin-fragmin kinase DDB_G0287957 (Dictyostelium discoideum (Social amoeba)).